The sequence spans 408 residues: Glutamate N-acetyltransferase (408 aa).

Substrate contacts are provided by Thr-150, Lys-176, Thr-189, Glu-271, Asn-403, and Thr-408. The Nucleophile role is filled by Thr-189.

Belongs to the ArgJ family. In terms of assembly, heterotetramer of two alpha and two beta chains.

It localises to the cytoplasm. It carries out the reaction N(2)-acetyl-L-ornithine + L-glutamate = N-acetyl-L-glutamate + L-ornithine. It functions in the pathway amino-acid biosynthesis; L-arginine biosynthesis; L-ornithine and N-acetyl-L-glutamate from L-glutamate and N(2)-acetyl-L-ornithine (cyclic): step 1/1. Functionally, catalyzes the transfer of the acetyl group from N(2)-acetylornithine to glutamate, forming N-acetylglutamate and L-ornithine. In Methanococcus maripaludis (strain C7 / ATCC BAA-1331), this protein is Glutamate N-acetyltransferase.